We begin with the raw amino-acid sequence, 365 residues long: Putative glutamate--cysteine ligase 2-2 (365 aa).

Belongs to the glutamate--cysteine ligase type 2 family. YbdK subfamily.

It carries out the reaction L-cysteine + L-glutamate + ATP = gamma-L-glutamyl-L-cysteine + ADP + phosphate + H(+). Its function is as follows. ATP-dependent carboxylate-amine ligase which exhibits weak glutamate--cysteine ligase activity. The chain is Putative glutamate--cysteine ligase 2-2 from Mycolicibacterium vanbaalenii (strain DSM 7251 / JCM 13017 / BCRC 16820 / KCTC 9966 / NRRL B-24157 / PYR-1) (Mycobacterium vanbaalenii).